Here is a 228-residue protein sequence, read N- to C-terminus: MIGIIGAMEEEVTILKNKLTQLSEISVAHVKFYTGILKDREVVITQSGIGKVNAAISTTLLINKFKPDVIINTGSAGALDESLNVGDVLISDDVKYHDADATAFGYEYGQIPQMPVAFQSSKPLIEKVSQVVQQQQLTAKVGLIVSGDSFIGSVEQRQKIKKAFPNAMAVEMEATAIAQTCYQFNVPFVVVRAVSDLANGEAEMSFEAFLEKAAVSSSQTVEALVSQL.

Glu11 serves as the catalytic Proton acceptor. Residues Gly77, Ile151, and 172–173 (ME) contribute to the substrate site. The Proton donor role is filled by Asp196.

The protein belongs to the PNP/UDP phosphorylase family. MtnN subfamily.

The enzyme catalyses S-adenosyl-L-homocysteine + H2O = S-(5-deoxy-D-ribos-5-yl)-L-homocysteine + adenine. It carries out the reaction S-methyl-5'-thioadenosine + H2O = 5-(methylsulfanyl)-D-ribose + adenine. It catalyses the reaction 5'-deoxyadenosine + H2O = 5-deoxy-D-ribose + adenine. It functions in the pathway amino-acid biosynthesis; L-methionine biosynthesis via salvage pathway; S-methyl-5-thio-alpha-D-ribose 1-phosphate from S-methyl-5'-thioadenosine (hydrolase route): step 1/2. In terms of biological role, catalyzes the irreversible cleavage of the glycosidic bond in both 5'-methylthioadenosine (MTA) and S-adenosylhomocysteine (SAH/AdoHcy) to adenine and the corresponding thioribose, 5'-methylthioribose and S-ribosylhomocysteine, respectively. Also cleaves 5'-deoxyadenosine, a toxic by-product of radical S-adenosylmethionine (SAM) enzymes, into 5-deoxyribose and adenine. The chain is 5'-methylthioadenosine/S-adenosylhomocysteine nucleosidase from Staphylococcus aureus (strain JH1).